Reading from the N-terminus, the 1237-residue chain is U3 small nucleolar RNA-associated protein 22 (1237 aa).

Positions 1 to 78 are disordered; sequence MATSVKRKAS…TNTAATRHNG (78 aa). Phosphoserine occurs at positions 10 and 58. A Phosphothreonine modification is found at Thr-60. Positions 61-78 are enriched in polar residues; that stretch reads SPESNEVATNTAATRHNG. Residue Ser-64 is modified to Phosphoserine.

It belongs to the NRAP family. As to quaternary structure, interacts with snoRNA U3. Interacts with MPP10. Component of the ribosomal small subunit (SSU) processome composed of at least 40 protein subunits and snoRNA U3. Interacts with UBP10.

It localises to the nucleus. It is found in the nucleolus. Its function is as follows. Involved in nucleolar processing of pre-18S ribosomal RNA and ribosome assembly. This chain is U3 small nucleolar RNA-associated protein 22 (UTP22), found in Saccharomyces cerevisiae (strain ATCC 204508 / S288c) (Baker's yeast).